We begin with the raw amino-acid sequence, 1550 residues long: Pentafunctional AROM polypeptide (1550 aa).

The segment at 1–379 (MSIERVPILG…YQLKAHQVSK (379 aa)) is 3-dehydroquinate synthase. NAD(+) contacts are provided by residues 42-44 (DTN), 80-83 (ENNK), 111-113 (GGV), and Asp116. Arg127 is a 7-phospho-2-dehydro-3-deoxy-D-arabino-heptonate binding site. Residue 136–137 (TT) coordinates NAD(+). Positions 143 and 149 each coordinate 7-phospho-2-dehydro-3-deoxy-D-arabino-heptonate. Residue Lys158 participates in NAD(+) binding. Asn159 lines the 7-phospho-2-dehydro-3-deoxy-D-arabino-heptonate pocket. Residues 176 to 179 (FLET) and Asn187 contribute to the NAD(+) site. Glu191 contributes to the Zn(2+) binding site. 7-phospho-2-dehydro-3-deoxy-D-arabino-heptonate-binding positions include 191–194 (EVVK) and Lys243. Glu253 acts as the Proton acceptor; for 3-dehydroquinate synthase activity in catalysis. Residues 257–261 (RNLLN) and His264 each bind 7-phospho-2-dehydro-3-deoxy-D-arabino-heptonate. His264 is a Zn(2+) binding site. His268 serves as the catalytic Proton acceptor; for 3-dehydroquinate synthase activity. Positions 280 and 351 each coordinate 7-phospho-2-dehydro-3-deoxy-D-arabino-heptonate. His280 is a binding site for Zn(2+). Positions 392–837 (VHPFTNPPKE…WDILHSKFKI (446 aa)) are EPSP synthase. A shikimate kinase region spans residues 857 to 1047 (DKGVIVIGMR…VPTGRSTAVV (191 aa)). 864 to 871 (GMRGTGKS) is a binding site for ATP. Positions 1048-1257 (LTLPDLNNVA…NDDGLLTIGE (210 aa)) are 3-dehydroquinase. Arg1193 serves as the catalytic Schiff-base intermediate with substrate; for 3-dehydroquinate dehydratase activity. Residues 1270 to 1550 (AKKFWVIGSP…EIIHRAVVEE (281 aa)) form a shikimate dehydrogenase region.

In the N-terminal section; belongs to the sugar phosphate cyclases superfamily. Dehydroquinate synthase family. The protein in the 2nd section; belongs to the EPSP synthase family. It in the 3rd section; belongs to the shikimate kinase family. This sequence in the 4th section; belongs to the type-I 3-dehydroquinase family. In the C-terminal section; belongs to the shikimate dehydrogenase family. In terms of assembly, homodimer. Zn(2+) serves as cofactor.

The protein localises to the cytoplasm. It carries out the reaction 7-phospho-2-dehydro-3-deoxy-D-arabino-heptonate = 3-dehydroquinate + phosphate. It catalyses the reaction 3-dehydroquinate = 3-dehydroshikimate + H2O. The catalysed reaction is shikimate + NADP(+) = 3-dehydroshikimate + NADPH + H(+). The enzyme catalyses shikimate + ATP = 3-phosphoshikimate + ADP + H(+). It carries out the reaction 3-phosphoshikimate + phosphoenolpyruvate = 5-O-(1-carboxyvinyl)-3-phosphoshikimate + phosphate. It functions in the pathway metabolic intermediate biosynthesis; chorismate biosynthesis; chorismate from D-erythrose 4-phosphate and phosphoenolpyruvate: step 2/7. Its pathway is metabolic intermediate biosynthesis; chorismate biosynthesis; chorismate from D-erythrose 4-phosphate and phosphoenolpyruvate: step 3/7. The protein operates within metabolic intermediate biosynthesis; chorismate biosynthesis; chorismate from D-erythrose 4-phosphate and phosphoenolpyruvate: step 4/7. It participates in metabolic intermediate biosynthesis; chorismate biosynthesis; chorismate from D-erythrose 4-phosphate and phosphoenolpyruvate: step 5/7. It functions in the pathway metabolic intermediate biosynthesis; chorismate biosynthesis; chorismate from D-erythrose 4-phosphate and phosphoenolpyruvate: step 6/7. In terms of biological role, the AROM polypeptide catalyzes 5 consecutive enzymatic reactions in prechorismate polyaromatic amino acid biosynthesis. The protein is Pentafunctional AROM polypeptide of Candida dubliniensis (strain CD36 / ATCC MYA-646 / CBS 7987 / NCPF 3949 / NRRL Y-17841) (Yeast).